We begin with the raw amino-acid sequence, 428 residues long: Light-independent protochlorophyllide reductase subunit N (428 aa).

[4Fe-4S] cluster-binding residues include C31, C56, and C117.

Belongs to the BchN/ChlN family. Protochlorophyllide reductase is composed of three subunits; BchL, BchN and BchB. Forms a heterotetramer of two BchB and two BchN subunits. [4Fe-4S] cluster serves as cofactor.

The enzyme catalyses chlorophyllide a + oxidized 2[4Fe-4S]-[ferredoxin] + 2 ADP + 2 phosphate = protochlorophyllide a + reduced 2[4Fe-4S]-[ferredoxin] + 2 ATP + 2 H2O. The protein operates within porphyrin-containing compound metabolism; bacteriochlorophyll biosynthesis (light-independent). Component of the dark-operative protochlorophyllide reductase (DPOR) that uses Mg-ATP and reduced ferredoxin to reduce ring D of protochlorophyllide (Pchlide) to form chlorophyllide a (Chlide). This reaction is light-independent. The NB-protein (BchN-BchB) is the catalytic component of the complex. This Rhodopseudomonas palustris (strain HaA2) protein is Light-independent protochlorophyllide reductase subunit N.